Reading from the N-terminus, the 338-residue chain is Transcription factor GRA2 (338 aa).

Disordered regions lie at residues 171–230 (CQDS…PHYA) and 256–277 (TQHE…DGGS). Positions 174-203 (SGVSQPSNLADDTLGQGQPVSTVVQPQHPG) are enriched in polar residues. The interval 223-236 (KRQRPHYAIEKRYR) is basic motif. One can recognise a bHLH domain in the interval 223 to 303 (KRQRPHYAIE…NQATLCIRQL (81 aa)). Residues 237-303 (AGLQERFEAL…NQATLCIRQL (67 aa)) form a helix-loop-helix motif region.

The protein localises to the nucleus. In terms of biological role, transcription factor that specifically regulates the expression of the gene cluster that mediates the biosynthesis of gramillins A and B, bicyclic lipopeptides that induce cell death in maize leaves but not in wheat leaves. The chain is Transcription factor GRA2 (GRA2) from Gibberella zeae (strain ATCC MYA-4620 / CBS 123657 / FGSC 9075 / NRRL 31084 / PH-1) (Wheat head blight fungus).